We begin with the raw amino-acid sequence, 597 residues long: Miltiradiene synthase KSL2, chloroplastic (597 aa).

The transit peptide at 1–51 (MSLAFNLRAIPFSGHTIQSRRGLFPVHESPMITTKPFVAVKCSLTTSTDLM) directs the protein to the chloroplast. Mg(2+)-binding residues include Asp-329, Asp-333, Asn-473, and Glu-481. Residues 329–333 (DDFFD) carry the DDXXD motif motif.

The protein belongs to the terpene synthase family. Mg(2+) is required as a cofactor.

The protein localises to the plastid. Its subcellular location is the chloroplast. The catalysed reaction is (+)-copalyl diphosphate = miltiradiene + diphosphate. It participates in secondary metabolite biosynthesis; terpenoid biosynthesis. Its function is as follows. Involved in the biosynthesis of ent-kaurene diterpenoids natural products such as oridonin, miltiradiene, eriocalyxin B and nezukol, known to exhibit antitumor, anti-inflammatory and antibacterial activities. Catalyzes the conversion of (+)-copalyl diphosphate ((+)-CPP) to miltiradiene. The polypeptide is Miltiradiene synthase KSL2, chloroplastic (Isodon japonicus (Scutellaria japonica)).